A 127-amino-acid polypeptide reads, in one-letter code: Modulator protein MzrA (127 aa).

The Cytoplasmic segment spans residues 1–11; sequence MRKPRVTLRHL. The helical transmembrane segment at 12–31 threads the bilayer; the sequence is AWSTMLLMVLGTGMLFWSAV. Residues 32 to 127 are Periplasmic-facing; the sequence is RQQESTLAIR…RLRDAPHRMG (96 aa).

The protein belongs to the MzrA family. As to quaternary structure, interacts with EnvZ.

The protein resides in the cell inner membrane. Its function is as follows. Modulates the activity of the EnvZ/OmpR two-component regulatory system, probably by directly modulating EnvZ enzymatic activity and increasing stability of phosphorylated OmpR. The polypeptide is Modulator protein MzrA (Citrobacter rodentium (strain ICC168) (Citrobacter freundii biotype 4280)).